A 149-amino-acid chain; its full sequence is CCAAT/enhancer-binding protein gamma (149 aa).

Over residues 1 to 12 (MSKVSQQNSTPG) the composition is skewed to polar residues. A disordered region spans residues 1 to 92 (MSKVSQQNST…SKQKAQDTLQ (92 aa)). Lys3 participates in a covalent cross-link: Glycyl lysine isopeptide (Lys-Gly) (interchain with G-Cter in SUMO2). The span at 28–37 (LQQVPQLVPA) shows a compositional bias: low complexity. Basic and acidic residues predominate over residues 56-72 (SPMDRNSDEYRQRRERN). One can recognise a bZIP domain in the interval 62–125 (SDEYRQRRER…SVLKDLFLEH (64 aa)). Residues 66–93 (RQRRERNNMAVKKSRLKSKQKAQDTLQR) form a basic motif region. The tract at residues 97-118 (LKEENERLEAKIKLLTKELSVL) is leucine-zipper. A disordered region spans residues 128–149 (NLADNVQPSSTENTTNPDKAGQ). A compositionally biased stretch (polar residues) spans 131–149 (DNVQPSSTENTTNPDKAGQ).

It belongs to the bZIP family. C/EBP subfamily. In terms of assembly, binds DNA as a dimer and can form stable heterodimers with CEBPA and CEBPB. Interacts with ZNF638; this interaction increases transcriptional activation.

Its subcellular location is the nucleus. In terms of biological role, transcription factor that binds to the promoter and the enhancer regions of target genes. Binds to the enhancer element PRE-I (positive regulatory element-I) of the IL-4 gene. Binds to the promoter and the enhancer of the immunoglobulin heavy chain. Binds to GPE1, a cis-acting element in the G-CSF gene promoter. This is CCAAT/enhancer-binding protein gamma (CEBPG) from Bos taurus (Bovine).